Consider the following 486-residue polypeptide: Scarecrow-like protein 15 (486 aa).

The disordered stretch occupies residues 1–28 (MKIPASSPQDTTNNNNNTNSTDSNHLSM). The span at 10 to 24 (DTTNNNNNTNSTDSN) shows a compositional bias: low complexity. One can recognise a GRAS domain in the interval 113-485 (DSVDNGGFDF…RALVATSAWR (373 aa)). The segment at 120 to 179 (FDFIEDLIRVVDCVESDELQLAQVVLSRLNQRLRSPAGRPLQRAAFYFKEALGSFLTGSN) is leucine repeat I (LRI). Residues 198–266 (IKEYSGISPI…VSGGFLRVTA (69 aa)) form a VHIID region. Positions 232–236 (VHVVD) match the VHIID motif. The tract at residues 278-310 (LVKENLTQFAAEMKIRFQIEFVLMKTFEMLSFK) is leucine repeat II (LRII). Residues 320-410 (TVVLISPAIF…AFVLRPKISA (91 aa)) are PFYRE. The tract at residues 413-485 (ETAADRRHTG…RALVATSAWR (73 aa)) is SAW.

This sequence belongs to the GRAS family. In terms of tissue distribution, expressed in seedlings, roots, leaves and flowers.

The protein resides in the nucleus. Its function is as follows. Probable transcription factor involved in plant development. The polypeptide is Scarecrow-like protein 15 (SCL15) (Arabidopsis thaliana (Mouse-ear cress)).